Consider the following 68-residue polypeptide: Large ribosomal subunit protein bL32 (68 aa).

A disordered region spans residues 1 to 24 (MAVPQNRVTRSRRNMRRSHDALVA).

This sequence belongs to the bacterial ribosomal protein bL32 family.

In Paracoccus denitrificans (strain Pd 1222), this protein is Large ribosomal subunit protein bL32.